The chain runs to 468 residues: TFIIA-alpha and beta-like factor (468 aa).

2 disordered regions span residues 215–236 (DRRLLPGNELRPQESSPYLSLP) and 379–416 (DSVSNEDSTANSSDNEDHQINAPEEDPLNSGDDVSEQD). Residues 380-391 (SVSNEDSTANSS) are compositionally biased toward polar residues. The segment covering 401 to 416 (PEEDPLNSGDDVSEQD) has biased composition (acidic residues).

The protein belongs to the TFIIA subunit 1 family. In terms of tissue distribution, testis specific. Expressed in pachytene spermatocytes and haploid spermatids.

The protein localises to the nucleus. In terms of biological role, may function as a testis specific transcription factor. Binds DNA in conjunction with GTF2A2 and TBP (the TATA-binding protein) and together with GTF2A2, allows mRNA transcription. The polypeptide is TFIIA-alpha and beta-like factor (Gtf2a1l) (Mus musculus (Mouse)).